A 278-amino-acid polypeptide reads, in one-letter code: Dermonecrotic toxin LbSicTox-betaIA1a (278 aa).

Residue H12 is part of the active site. Residues E32 and D34 each contribute to the Mg(2+) site. The Nucleophile role is filled by H48. 2 disulfide bridges follow: C52-C58 and C54-C197. D92 contacts Mg(2+). A glycan (N-linked (GlcNAc...) asparagine) is linked at N258.

This sequence belongs to the arthropod phospholipase D family. Class II subfamily. Class IIb sub-subfamily. Expressed by the venom gland.

The protein localises to the secreted. It catalyses the reaction an N-(acyl)-sphingosylphosphoethanolamine = an N-(acyl)-sphingosyl-1,3-cyclic phosphate + ethanolamine. It carries out the reaction a 1-acyl-sn-glycero-3-phosphocholine = a 1-acyl-sn-glycero-2,3-cyclic phosphate + choline. The catalysed reaction is a 1-acyl-sn-glycero-3-phosphoethanolamine = a 1-acyl-sn-glycero-2,3-cyclic phosphate + ethanolamine. Functionally, this toxin does not show activity on sphingomyelin (SM) and does not show dermonecrotic activities. This toxin is a member of dermonecrotic toxins that cleave the phosphodiester linkage between the phosphate and headgroup of certain phospholipids (sphingolipid and lysolipid substrates), forming an alcohol (often choline) and a cyclic phosphate. It may act on ceramide phosphoethanolamine (CPE), lysophosphatidylcholine (LPC) and lysophosphatidylethanolamine (LPE), but not on lysophosphatidylserine (LPS), and lysophosphatidylglycerol (LPG). It may act by transphosphatidylation, releasing exclusively cyclic phosphate products as second products. This Loxosceles boneti (North American fiddleback spider) protein is Dermonecrotic toxin LbSicTox-betaIA1a.